A 438-amino-acid chain; its full sequence is tRNA(Ile)-lysidine synthase (438 aa).

19-24 (SGGIDS) is a binding site for ATP.

The protein belongs to the tRNA(Ile)-lysidine synthase family.

It is found in the cytoplasm. It catalyses the reaction cytidine(34) in tRNA(Ile2) + L-lysine + ATP = lysidine(34) in tRNA(Ile2) + AMP + diphosphate + H(+). In terms of biological role, ligates lysine onto the cytidine present at position 34 of the AUA codon-specific tRNA(Ile) that contains the anticodon CAU, in an ATP-dependent manner. Cytidine is converted to lysidine, thus changing the amino acid specificity of the tRNA from methionine to isoleucine. The polypeptide is tRNA(Ile)-lysidine synthase (Buchnera aphidicola subsp. Baizongia pistaciae (strain Bp)).